Consider the following 281-residue polypeptide: DegV domain-containing protein YqaC (281 aa).

Residues 3 to 279 enclose the DegV domain; the sequence is LAVITDSSAD…LNTVAYGISP (277 aa). Threonine 60 and serine 93 together coordinate hexadecanoate.

Functionally, may bind long-chain fatty acids, such as palmitate, and may play a role in lipid transport or fatty acid metabolism. This is DegV domain-containing protein YqaC (yqaC) from Lactococcus lactis subsp. lactis (strain IL1403) (Streptococcus lactis).